The chain runs to 231 residues: 7-cyano-7-deazaguanine synthase (231 aa).

8-18 (FSGGQDSTTCL) contributes to the ATP binding site. 4 residues coordinate Zn(2+): Cys188, Cys197, Cys200, and Cys203.

It belongs to the QueC family. It depends on Zn(2+) as a cofactor.

The enzyme catalyses 7-carboxy-7-deazaguanine + NH4(+) + ATP = 7-cyano-7-deazaguanine + ADP + phosphate + H2O + H(+). It participates in purine metabolism; 7-cyano-7-deazaguanine biosynthesis. Its function is as follows. Catalyzes the ATP-dependent conversion of 7-carboxy-7-deazaguanine (CDG) to 7-cyano-7-deazaguanine (preQ(0)). This chain is 7-cyano-7-deazaguanine synthase, found in Escherichia coli (strain SMS-3-5 / SECEC).